The chain runs to 172 residues: uncharacterized protein (172 aa).

The next 4 membrane-spanning stretches (helical) occupy residues 46-66 (MFSI…FLYP), 76-96 (LLSL…VGLF), 104-124 (WKFL…LGWS), and 129-149 (FFYA…FTEI).

The protein localises to the endoplasmic reticulum membrane. This is an uncharacterized protein from Schizosaccharomyces pombe (strain 972 / ATCC 24843) (Fission yeast).